The primary structure comprises 365 residues: Methionine import ATP-binding protein MetN (365 aa).

The ABC transporter domain maps to Ile17 to Leu256. Gly53–Ser60 is an ATP binding site. Positions Ser346–His365 are disordered.

Belongs to the ABC transporter superfamily. Methionine importer (TC 3.A.1.24) family. In terms of assembly, the complex is composed of two ATP-binding proteins (MetN), two transmembrane proteins (MetI) and a solute-binding protein (MetQ).

The protein resides in the cell membrane. It catalyses the reaction L-methionine(out) + ATP + H2O = L-methionine(in) + ADP + phosphate + H(+). The enzyme catalyses D-methionine(out) + ATP + H2O = D-methionine(in) + ADP + phosphate + H(+). Part of the ABC transporter complex MetNIQ involved in methionine import. Responsible for energy coupling to the transport system. In Cutibacterium acnes (strain DSM 16379 / KPA171202) (Propionibacterium acnes), this protein is Methionine import ATP-binding protein MetN.